The following is a 168-amino-acid chain: Photosystem I assembly protein Ycf3 (168 aa).

TPR repeat units follow at residues Ala-35–Pro-68, Ser-72–Leu-105, and Gly-120–Asn-153.

Belongs to the Ycf3 family.

The protein resides in the plastid. It is found in the chloroplast thylakoid membrane. In terms of biological role, essential for the assembly of the photosystem I (PSI) complex. May act as a chaperone-like factor to guide the assembly of the PSI subunits. The chain is Photosystem I assembly protein Ycf3 from Physcomitrium patens (Spreading-leaved earth moss).